The primary structure comprises 202 residues: Uclacyanin-2 (202 aa).

The signal sequence occupies residues 1 to 29 (MAMNGLSKMAVAAATALLLVLTIVPGAVA). Residues 30-126 (VTYTIEWTTG…GMKLAVNVVA (97 aa)) enclose the Phytocyanin domain. H65 is a Cu cation binding site. N86 carries N-linked (GlcNAc...) asparagine glycosylation. Residues C106, H111, and M118 each coordinate Cu cation. The interval 129–181 (AGPPATPTPPSSTPGTPTTPESPPSGGSPTPTTPTPGAGSTSPPPPPKASGAS) is disordered. Low complexity predominate over residues 141-169 (TPGTPTTPESPPSGGSPTPTTPTPGAGST). S178 carries GPI-anchor amidated serine lipidation. Positions 179-202 (GASKGVMSYVLVGVSMVLGYGLWM) are cleaved as a propeptide — removed in mature form.

It is found in the cell membrane. Functionally, probably acts as an electron carrier involved in oxygen activation and/or lignin formation. This is Uclacyanin-2 from Arabidopsis thaliana (Mouse-ear cress).